We begin with the raw amino-acid sequence, 962 residues long: UPF0182 protein SACE_1102 (962 aa).

7 helical membrane passes run 10-30 (ILLILGGVVLIALIAGSRLLG), 55-75 (LGLGVAAGAFVGVVLLLNLWI), 106-126 (LFGWGIPIVIAVIAGLTAQSD), 168-188 (FVAITVGFIGALVTHYIFGGI), 203-223 (IQLSVLAGLFVLLKAVDYFLD), 250-270 (VKLILMIIAVFCALAFFAAIF), and 279-299 (IATVLLVLSSILVGSVWPALL). 2 disordered regions span residues 707–730 (RTFWEVPPDPTSSGQGGSNQGNQQ) and 876–916 (FGPG…EMTK). A compositionally biased stretch (pro residues) spans 899-910 (GQQPPTQQPPAG).

This sequence belongs to the UPF0182 family.

It localises to the cell membrane. In Saccharopolyspora erythraea (strain ATCC 11635 / DSM 40517 / JCM 4748 / NBRC 13426 / NCIMB 8594 / NRRL 2338), this protein is UPF0182 protein SACE_1102.